Here is a 196-residue protein sequence, read N- to C-terminus: Corrinoid adenosyltransferase CobA (196 aa).

Residue 36–42 (GNGKGKT) coordinates ATP.

This sequence belongs to the Cob(I)alamin adenosyltransferase family. Homodimer.

It is found in the cytoplasm. The catalysed reaction is 2 cob(II)yrinate a,c diamide + reduced [electron-transfer flavoprotein] + 2 ATP = 2 adenosylcob(III)yrinate a,c-diamide + 2 triphosphate + oxidized [electron-transfer flavoprotein] + 3 H(+). The enzyme catalyses 2 cob(II)alamin + reduced [electron-transfer flavoprotein] + 2 ATP = 2 adenosylcob(III)alamin + 2 triphosphate + oxidized [electron-transfer flavoprotein] + 3 H(+). It participates in cofactor biosynthesis; adenosylcobalamin biosynthesis; adenosylcobalamin from cob(II)yrinate a,c-diamide: step 2/7. Its function is as follows. Required for both de novo synthesis of the corrin ring for the assimilation of exogenous corrinoids. Participates in the adenosylation of a variety of incomplete and complete corrinoids. The sequence is that of Corrinoid adenosyltransferase CobA (btuR) from Salmonella typhimurium (strain LT2 / SGSC1412 / ATCC 700720).